We begin with the raw amino-acid sequence, 182 residues long: ATP-dependent protease subunit HslV (182 aa).

The active site involves Thr10. 3 residues coordinate Na(+): Ala166, Cys169, and Ser172.

Belongs to the peptidase T1B family. HslV subfamily. A double ring-shaped homohexamer of HslV is capped on each side by a ring-shaped HslU homohexamer. The assembly of the HslU/HslV complex is dependent on binding of ATP.

Its subcellular location is the cytoplasm. The catalysed reaction is ATP-dependent cleavage of peptide bonds with broad specificity.. Its activity is regulated as follows. Allosterically activated by HslU binding. Protease subunit of a proteasome-like degradation complex believed to be a general protein degrading machinery. This chain is ATP-dependent protease subunit HslV, found in Rickettsia peacockii (strain Rustic).